Reading from the N-terminus, the 1017-residue chain is Probable DNA ligase (1017 aa).

Residues 1 to 363 (MPWDVKFSHG…PACATPLHAP (363 aa)) form a unknown region. Positions 326–352 (GIRSSPPQVRAGDATPSSRSSGDAGVA) are disordered. The interval 364 to 1017 (DSFARFVAAA…GARPPPAASD (654 aa)) is DNA ligase. Residue glutamate 667 participates in ATP binding. Lysine 669 (N6-AMP-lysine intermediate) is an active-site residue. Residues arginine 674, arginine 689, glutamate 717, arginine 860, and lysine 866 each coordinate ATP.

The protein in the C-terminal section; belongs to the ATP-dependent DNA ligase family. Requires Mg(2+) as cofactor.

The catalysed reaction is ATP + (deoxyribonucleotide)n-3'-hydroxyl + 5'-phospho-(deoxyribonucleotide)m = (deoxyribonucleotide)n+m + AMP + diphosphate.. Its function is as follows. DNA ligase that seals nicks in double-stranded DNA during DNA replication, DNA recombination and DNA repair. This is Probable DNA ligase (lig) from Opitutus terrae (strain DSM 11246 / JCM 15787 / PB90-1).